A 785-amino-acid polypeptide reads, in one-letter code: Adhesion G-protein coupled receptor G7 (785 aa).

An N-terminal signal peptide occupies residues 1–26; sequence MRSCRSCNVRVLVAIVCGLLTGIVLG. Residues 27-435 are Extracellular-facing; that stretch reads LGIWRMVIRI…KYPKSLDILS (409 aa). Asparagine 82, asparagine 122, asparagine 133, asparagine 152, asparagine 159, asparagine 178, asparagine 195, asparagine 239, asparagine 289, asparagine 348, asparagine 400, and asparagine 408 each carry an N-linked (GlcNAc...) asparagine glycan. The GAIN-B domain occupies 271–425; that stretch reads FSVQKGSSNS…AVLMSFKKDY (155 aa). Cystine bridges form between cysteine 380–cysteine 407 and cysteine 395–cysteine 409. A GPS region spans residues 380 to 425; sequence CVYWNFLINDWDTQGCQKTGNTTEFLRCNCSHTTNFAVLMSFKKDY. The chain crosses the membrane as a helical span at residues 436–456; the sequence is NIGCALSIAGLALTILFQILT. The Cytoplasmic segment spans residues 457-465; the sequence is RKIRKTSVT. The helical transmembrane segment at 466-486 threads the bilayer; sequence WVLVSLCSSMLIFNLLFVFGI. The Extracellular portion of the chain corresponds to 487–523; the sequence is ENSNKNLKTSDSDINVKPENNKIPESDTIETPNPSCT. A helical transmembrane segment spans residues 524–544; it reads AIAALLHYFLLVTFTWNGLSA. Residues 545 to 561 are Cytoplasmic-facing; sequence TQLYFLLIRTMKPLPRH. A helical transmembrane segment spans residues 562–582; it reads FIIFISLVGWGVPAIIVGVTI. Residues 583 to 623 lie on the Extracellular side of the membrane; the sequence is GSIYALSGNKRYWELDYRQEEICWLAVPKDNDYARSPLLWS. Residues 624-644 traverse the membrane as a helical segment; the sequence is FIIPVTIILITNITIFVIITV. Topologically, residues 645–668 are cytoplasmic; sequence KVLWKNNQNLTSTKKVSSLKKVFS. The chain crosses the membrane as a helical span at residues 669–689; the sequence is TLSIAVVFGVTWILAYAMLIS. At 690–694 the chain is on the extracellular side; that stretch reads NDDIR. A helical membrane pass occupies residues 695-715; sequence IVFSYIFCLFNTTQGLQIFIL. Residues 716–785 lie on the Cytoplasmic side of the membrane; that stretch reads YTVRTKVFQS…SGMTEETSLS (70 aa).

The protein belongs to the G-protein coupled receptor 2 family. Adhesion G-protein coupled receptor (ADGR) subfamily. Selectively expressed in the intestinal tissues.

It is found in the membrane. In terms of biological role, orphan receptor. The chain is Adhesion G-protein coupled receptor G7 (Adgrg7) from Mus musculus (Mouse).